Consider the following 423-residue polypeptide: F-box/LRR-repeat protein 2 (423 aa).

Positions 9-55 constitute an F-box domain; it reads GLINKKLPKELLLRIFSFLDIVTLCRCAQISKAWNILALDGSNWQRI. LRR repeat units follow at residues 61 to 87, 88 to 113, 114 to 139, 140 to 165, 166 to 191, 192 to 217, 218 to 243, 244 to 269, 270 to 295, 296 to 321, 322 to 350, 351 to 375, and 376 to 401; these read QTDVEGRVVENISKRCGGFLRKLSLRG, CIGVGDSSLKTFAQNCRNIEHLNLNG, CTKITDSTCYSLSRFCSKLKHLDLTS, CVSITNSSLKGISEGCRHLEYLNLSW, CDQITKDGVEALVRGCRGLRALLLRG, CTQLEDEALKHIQNYCHELVSLNLQS, CSRVTDDGVVQLCRGCPRLQALCLSG, CGSLTDASLTALALNCPRLQILEAAR, CSHLTDAGFTLLARNCHDLEKMDLEE, CILITDRTLTQLSIHCPKLQALSLSH, CELITDDGILHLSNSPCGHERLRVLELDN, CLLITDVALEHLEHCRGLERLELYD, and CQQVTRAGIKRMRAQLPHVRVHAYFA. The interval 80-90 is interaction with Calmodulin; it reads LRKLSLRGCIG. Lys201 participates in a covalent cross-link: Glycyl lysine isopeptide (Lys-Gly) (interchain with G-Cter in ubiquitin). A Phosphothreonine modification is found at Thr404. Cys420 carries S-geranylgeranyl cysteine lipidation. A CAAX motif motif is present at residues 420-423; that stretch reads CVIL.

Part of the SCF (SKP1-CUL1-F-box) E3 ubiquitin-protein ligase complex SCF(FBXL2) composed of CUL1, SKP1, RBX1 and FBXL2. Interacts with calmodulin; may antagonize substrate ubiquitination by SCF(FBXL2). May interact with PIK3R1. Interacts with PTPN13. Phosphorylated by GSK-beta (GSK3B), promoting recognition by FBXO3, leading to its ubiquitination by the SCF(FBXO3) complex. Post-translationally, ubiquitinated at Lys-201 by the SCF(FBXO3) complex in response to lipopolysaccharide (LPS), leading to its degradation by the proteasome.

The protein localises to the membrane. Its pathway is protein modification; protein ubiquitination. Calcium-activated substrate recognition component of the SCF (SKP1-cullin-F-box protein) E3 ubiquitin-protein ligase complex, SCF(FBXL2), which mediates the ubiquitination and subsequent proteasomal degradation of target proteins. Unlike many F-box proteins, FBXL2 does not seem to target phosphodegron within its substrates but rather calmodulin-binding motifs and is thereby antagonized by calmodulin. This is the case for the cyclins CCND2 and CCND3 which polyubiquitination and subsequent degradation are inhibited by calmodulin. Through CCND2 and CCND3 degradation induces cell-cycle arrest in G(0). SCF(FBXL2) also mediates PIK3R2 ubiquitination and proteasomal degradation thereby regulating phosphatidylinositol 3-kinase signaling and autophagy. PCYT1A monoubiquitination by SCF(FBXL2) and subsequent degradation regulates synthesis of phosphatidylcholine, which is utilized for formation of membranes and of pulmonary surfactant. The SCF(FBXL2) complex acts as a regulator of inflammation by mediating ubiquitination and degradation of TRAF proteins (TRAF1, TRAF2, TRAF3, TRAF4, TRAF5 and TRAF6). The SCF(FBXL2) complex acts as a negative regulator of the NLRP3 inflammasome by mediating ubiquitination and degradation of NLRP3. This is F-box/LRR-repeat protein 2 from Bos taurus (Bovine).